The following is a 163-amino-acid chain: Phosphopantetheine adenylyltransferase (163 aa).

A substrate-binding site is contributed by serine 9. ATP is bound by residues 9 to 10 and histidine 17; that span reads SF. Residues lysine 41, isoleucine 75, and arginine 89 each coordinate substrate. Residues 90-92, glutamate 100, and 125-131 contribute to the ATP site; these read GIR and HLYVRSD.

The protein belongs to the bacterial CoaD family. In terms of assembly, homohexamer. Mg(2+) is required as a cofactor.

Its subcellular location is the cytoplasm. The catalysed reaction is (R)-4'-phosphopantetheine + ATP + H(+) = 3'-dephospho-CoA + diphosphate. It participates in cofactor biosynthesis; coenzyme A biosynthesis; CoA from (R)-pantothenate: step 4/5. Its function is as follows. Reversibly transfers an adenylyl group from ATP to 4'-phosphopantetheine, yielding dephospho-CoA (dPCoA) and pyrophosphate. This Borrelia garinii subsp. bavariensis (strain ATCC BAA-2496 / DSM 23469 / PBi) (Borreliella bavariensis) protein is Phosphopantetheine adenylyltransferase.